Here is a 999-residue protein sequence, read N- to C-terminus: Caspase recruitment domain-containing protein 14 (999 aa).

Residues 15 to 107 (DEEMLWDMLE…DVYTLVTGLQ (93 aa)) enclose the CARD domain. Residues 125–411 (TECLAGAISS…QLRRLQAEAP (287 aa)) adopt a coiled-coil conformation. The maintains the protein in an inactive state stretch occupies residues 409–565 (EAPGGPKQEA…RRPARKILSQ (157 aa)). At serine 541 the chain carries Phosphoserine. Residues 572-655 (QGDALLEQIG…SCYLSVKINT (84 aa)) form the PDZ domain. The Guanylate kinase-like domain maps to 803–986 (SESCFTLAPY…LLSCVRLAIA (184 aa)).

Interacts (via CARD domain) with BCL10 (via CARD domain). Forms a complex with MALT1 and BCL10; resulting in the formation of a CBM (CARD14-BLC10-MALT1) complex. Interacts with TRAF2, TRAF3 and TRAF6.

Its subcellular location is the cytoplasm. Acts as a scaffolding protein that can activate the inflammatory transcription factor NF-kappa-B and p38/JNK MAP kinase signaling pathways. Forms a signaling complex with BCL10 and MALT1, and activates MALT1 proteolytic activity and inflammatory gene expression. MALT1 is indispensable for CARD14-induced activation of NF-kappa-B and p38/JNK MAP kinases. May play a role in signaling mediated by TRAF2, TRAF3 and TRAF6 and protects cells against apoptosis. The chain is Caspase recruitment domain-containing protein 14 (Card14) from Mus musculus (Mouse).